Reading from the N-terminus, the 209-residue chain is tRNA (guanine-N(7)-)-methyltransferase (209 aa).

3 residues coordinate S-adenosyl-L-methionine: Glu-40, Glu-65, and Asp-114. The active site involves Asp-114. Residues Asp-150 and 188–191 (TAFE) each bind substrate.

It belongs to the class I-like SAM-binding methyltransferase superfamily. TrmB family.

The enzyme catalyses guanosine(46) in tRNA + S-adenosyl-L-methionine = N(7)-methylguanosine(46) in tRNA + S-adenosyl-L-homocysteine. It functions in the pathway tRNA modification; N(7)-methylguanine-tRNA biosynthesis. Functionally, catalyzes the formation of N(7)-methylguanine at position 46 (m7G46) in tRNA. The chain is tRNA (guanine-N(7)-)-methyltransferase from Bdellovibrio bacteriovorus (strain ATCC 15356 / DSM 50701 / NCIMB 9529 / HD100).